We begin with the raw amino-acid sequence, 414 residues long: EARP and GARP complex-interacting protein 1 (414 aa).

Met-1 is modified (N-acetylmethionine). WD repeat units follow at residues 159-199 (TAHG…SQAV), 209-249 (KGQL…QIYC), 253-293 (AHGQ…EPVK), and 297-337 (EHSH…SEPF). Residues 337-362 (FGHLVDDDDISDQEDHRSEEKSKEPL) are disordered. A Phosphoserine modification is found at Ser-347. Positions 349–362 (QEDHRSEEKSKEPL) are enriched in basic and acidic residues. A WD 5 repeat occupies 372–412 (EHEDSVYAVDWSSADPWLFASLSYDGRLVINRVPRALKYHI).

The protein belongs to the WD repeat EIPR1 family. In terms of assembly, interacts with two multisubunit tethering complexes: EARP composed of VPS50, VPS51, VPS52 and VPS53 subunits and GARP complex composed of VPS51, VPS52, VPS53 and VPS54 subunits. Interacts with SNAP29.

The protein resides in the golgi apparatus. The protein localises to the trans-Golgi network. Its function is as follows. Acts as a component of endosomal retrieval machinery that is involved in protein transport from early endosomes to either recycling endosomes or the trans-Golgi network. Mediates the recruitment of Golgi-associated retrograde protein (GARP) complex to the trans-Golgi network and controls early endosome-to-Golgi transport of internalized protein. Promotes the recycling of internalized transferrin receptor (TFRC) to the plasma membrane through interaction with endosome-associated recycling protein (EARP) complex. Controls proper insulin distribution and secretion, and retention of cargo in mature dense core vesicles. Required for the stability of the endosome-associated retrograde protein (EARP) complex subunits and for proper localization and association of EARP with membranes. The sequence is that of EARP and GARP complex-interacting protein 1 from Pongo abelii (Sumatran orangutan).